A 237-amino-acid chain; its full sequence is Phosphoribosylaminoimidazole-succinocarboxamide synthase (237 aa).

The protein belongs to the SAICAR synthetase family.

It catalyses the reaction 5-amino-1-(5-phospho-D-ribosyl)imidazole-4-carboxylate + L-aspartate + ATP = (2S)-2-[5-amino-1-(5-phospho-beta-D-ribosyl)imidazole-4-carboxamido]succinate + ADP + phosphate + 2 H(+). Its pathway is purine metabolism; IMP biosynthesis via de novo pathway; 5-amino-1-(5-phospho-D-ribosyl)imidazole-4-carboxamide from 5-amino-1-(5-phospho-D-ribosyl)imidazole-4-carboxylate: step 1/2. The sequence is that of Phosphoribosylaminoimidazole-succinocarboxamide synthase from Listeria monocytogenes serotype 4b (strain CLIP80459).